The following is an 88-amino-acid chain: MARVTVEDCLPLVDNRFALVLLATKRTRQLMAGARPLQGHAKNKAPVVALREIATGKVRFDRSVRDALSGKFDKEKSTIPAGQTRTLR.

This sequence belongs to the RNA polymerase subunit omega family. In terms of assembly, the RNAP catalytic core consists of 2 alpha, 1 beta, 1 beta' and 1 omega subunit. When a sigma factor is associated with the core the holoenzyme is formed, which can initiate transcription.

The catalysed reaction is RNA(n) + a ribonucleoside 5'-triphosphate = RNA(n+1) + diphosphate. Its function is as follows. Promotes RNA polymerase assembly. Latches the N- and C-terminal regions of the beta' subunit thereby facilitating its interaction with the beta and alpha subunits. The chain is DNA-directed RNA polymerase subunit omega from Anaeromyxobacter sp. (strain Fw109-5).